A 338-amino-acid chain; its full sequence is Ribosomal RNA small subunit methyltransferase H (338 aa).

Residues 46-48, aspartate 63, phenylalanine 90, aspartate 106, and glutamine 113 each bind S-adenosyl-L-methionine; that span reads GGY.

The protein belongs to the methyltransferase superfamily. RsmH family.

It is found in the cytoplasm. The enzyme catalyses cytidine(1402) in 16S rRNA + S-adenosyl-L-methionine = N(4)-methylcytidine(1402) in 16S rRNA + S-adenosyl-L-homocysteine + H(+). Its function is as follows. Specifically methylates the N4 position of cytidine in position 1402 (C1402) of 16S rRNA. The protein is Ribosomal RNA small subunit methyltransferase H of Mesorhizobium japonicum (strain LMG 29417 / CECT 9101 / MAFF 303099) (Mesorhizobium loti (strain MAFF 303099)).